Consider the following 464-residue polypeptide: Endo-1,4-beta-xylanase A (464 aa).

The N-terminal stretch at 1–33 (MFRHHPTRGRRTAGLLAAALATLSAGLTAVAPA) is a signal peptide. The 310-residue stretch at 40–349 (TATLGELAEA…KPAYHAIAAA (310 aa)) folds into the GH10 domain. The active-site Proton donor is the Glu166. Glu271 acts as the Nucleophile in catalysis. In terms of domain architecture, CBM2 spans 354 to 457 (SPAPGGNCTA…TPADVTCTPG (104 aa)).

Belongs to the glycosyl hydrolase 10 (cellulase F) family. Requires Does not require any standard metal (Mg(2+), Mn2(+), Ca(2+)). as cofactor.

It catalyses the reaction Endohydrolysis of (1-&gt;4)-beta-D-xylosidic linkages in xylans.. It functions in the pathway glycan degradation; xylan degradation. Its activity is regulated as follows. Completely inhibited by Hg(2+), unaffected by EDTA. Contributes to hydrolysis of hemicellulose, the major component of plant cell-walls. Hydrolyzes xylan to xylose and xylobiose. The protein is Endo-1,4-beta-xylanase A (xynAS9) of Streptomyces sp.